Consider the following 854-residue polypeptide: Transcription factor asR3 (854 aa).

Positions 19–45 (CWECRRRKIKCDRNDPCAHCIRHETQC) form a DNA-binding region, zn(2)-C6 fungal-type. A disordered region spans residues 56 to 156 (TDSDVSRTRP…SLSTNTSPSA (101 aa)). Composition is skewed to polar residues over residues 78–90 (ASGS…TRPS) and 125–145 (LNPS…SSRG). Residues 146 to 156 (PSLSTNTSPSA) show a composition bias toward low complexity.

It is found in the nucleus. In terms of biological role, transcription factor; part of the gene cluster that mediates the biosynthesis of xenovulene A, an unusual meroterpenoid that has potent inhibitory effects on the human gamma-aminobutyrate A (GABAA) benzodiazepine receptor. This chain is Transcription factor asR3, found in Sarocladium schorii (Acremonium strictum (strain IMI 501407)).